The chain runs to 82 residues: Leucinostatins biosynthesis cluster protein M (82 aa).

Residues 34-82 form a disordered region; that stretch reads ARNETHDPSGPRAPVSSMRLGPRSRPYHHGTARLRGSPNCSRDSSSAAT. The span at 71–82 shows a compositional bias: polar residues; sequence PNCSRDSSSAAT.

In terms of biological role, part of the gene cluster that mediates the biosynthesis of the lipopeptide antibiotics leucinostatins that show extensive biological activities, including antimalarial, antiviral, antibacterial, antifungal, and antitumor activities, as well as phytotoxic. The function of lcsM within the leucinostatins biosynthesis has not been identified yet. The polypeptide is Leucinostatins biosynthesis cluster protein M (Purpureocillium lilacinum (Paecilomyces lilacinus)).